A 413-amino-acid polypeptide reads, in one-letter code: Serine/threonine transporter SstT (413 aa).

Transmembrane regions (helical) follow at residues 14–34, 44–64, 82–102, 141–161, 178–198, 217–237, 290–310, 330–350, and 356–376; these read GSLV…ASFS, LGTL…FILV, IVLL…VVSF, ALAS…GVAL, GVTF…FGLV, LMVL…LIVF, IPLG…VLTL, LVAA…LLLI, and LFGI…IIGV.

This sequence belongs to the dicarboxylate/amino acid:cation symporter (DAACS) (TC 2.A.23) family.

It is found in the cell inner membrane. The catalysed reaction is L-serine(in) + Na(+)(in) = L-serine(out) + Na(+)(out). It carries out the reaction L-threonine(in) + Na(+)(in) = L-threonine(out) + Na(+)(out). In terms of biological role, involved in the import of serine and threonine into the cell, with the concomitant import of sodium (symport system). This Edwardsiella ictaluri (strain 93-146) protein is Serine/threonine transporter SstT.